Here is a 104-residue protein sequence, read N- to C-terminus: Urease subunit beta (104 aa).

Belongs to the urease beta subunit family. In terms of assembly, heterotrimer of UreA (gamma), UreB (beta) and UreC (alpha) subunits. Three heterotrimers associate to form the active enzyme.

The protein localises to the cytoplasm. It catalyses the reaction urea + 2 H2O + H(+) = hydrogencarbonate + 2 NH4(+). Its pathway is nitrogen metabolism; urea degradation; CO(2) and NH(3) from urea (urease route): step 1/1. The chain is Urease subunit beta from Rhodococcus jostii (strain RHA1).